The chain runs to 259 residues: Protein CWC15 homolog (259 aa).

The interval methionine 1 to arginine 182 is disordered. Residues aspartate 52–arginine 71 are compositionally biased toward basic and acidic residues. Low complexity-rich tracts occupy residues serine 72–glycine 82 and glutamine 114–alanine 126. Over residues aspartate 129 to alanine 150 the composition is skewed to acidic residues. Residues alanine 150 to arginine 182 adopt a coiled-coil conformation. Positions glutamine 157–arginine 182 are enriched in basic and acidic residues.

The protein belongs to the CWC15 family.

Its function is as follows. Involved in pre-mRNA splicing. This chain is Protein CWC15 homolog (c12.1), found in Drosophila melanogaster (Fruit fly).